Here is a 273-residue protein sequence, read N- to C-terminus: Ribosomal RNA small subunit methyltransferase A (273 aa).

N18, L20, G45, E66, D91, and N113 together coordinate S-adenosyl-L-methionine.

It belongs to the class I-like SAM-binding methyltransferase superfamily. rRNA adenine N(6)-methyltransferase family. RsmA subfamily.

The protein resides in the cytoplasm. The enzyme catalyses adenosine(1518)/adenosine(1519) in 16S rRNA + 4 S-adenosyl-L-methionine = N(6)-dimethyladenosine(1518)/N(6)-dimethyladenosine(1519) in 16S rRNA + 4 S-adenosyl-L-homocysteine + 4 H(+). Functionally, specifically dimethylates two adjacent adenosines (A1518 and A1519) in the loop of a conserved hairpin near the 3'-end of 16S rRNA in the 30S particle. May play a critical role in biogenesis of 30S subunits. This is Ribosomal RNA small subunit methyltransferase A from Escherichia coli O157:H7.